We begin with the raw amino-acid sequence, 266 residues long: Putative cysteine-rich repeat secretory protein 20 (266 aa).

Positions 1–33 (MYFPPSSVPKRLVLVHISAVVAIKLLLIRSVSS) are cleaved as a signal peptide. Gnk2-homologous domains lie at 40–142 (YLQH…SIRN) and 148–261 (YNNN…LYPF).

It belongs to the cysteine-rich repeat secretory protein family.

It localises to the secreted. This chain is Putative cysteine-rich repeat secretory protein 20 (CRRSP20), found in Arabidopsis thaliana (Mouse-ear cress).